Consider the following 128-residue polypeptide: Small ribosomal subunit protein bS6 (128 aa).

The protein belongs to the bacterial ribosomal protein bS6 family.

Functionally, binds together with bS18 to 16S ribosomal RNA. This is Small ribosomal subunit protein bS6 from Geotalea uraniireducens (strain Rf4) (Geobacter uraniireducens).